We begin with the raw amino-acid sequence, 83 residues long: Conotoxin LiCr95 (83 aa).

The N-terminal stretch at 1-22 is a signal peptide; that stretch reads MKLTCALIVAMLFLTACQLTTT. Residues 23–50 constitute a propeptide that is removed on maturation; that stretch reads DDSRGRQKYPTERLRVKMRNPKLSKLTK. Cystine bridges form between cysteine 52–cysteine 67, cysteine 59–cysteine 71, and cysteine 66–cysteine 80.

This sequence belongs to the conotoxin O1 superfamily. In terms of tissue distribution, expressed by the venom duct.

Its subcellular location is the secreted. This chain is Conotoxin LiCr95, found in Conus lividus (Livid cone).